Here is a 248-residue protein sequence, read N- to C-terminus: MALLEICCYSMECALTAQQNGADRVELCAAPKEGGLTPSLGVLKSVRQRVTIPVHPIIRPRGGDFCYSDGEFAAILEDVRTVRELGFPGLVTGVLDVDGNVDMSRMEKIMAAAGPLAVTFHRAFDMCANPLNTLNNLAELGITRVLTSGQKSDALQGLSKIMELIAHRDAPIIMAGAGVRAENLHHFLAAGVLEVHSSAGAWQASPMRYRNQGLSMSSDAHADEYSRYVVDGAAVAEMKGIIERHQAK.

Belongs to the CutC family. In terms of assembly, homodimer.

It is found in the cytoplasm. This Shigella dysenteriae serotype 1 (strain Sd197) protein is PF03932 family protein CutC.